The following is a 376-amino-acid chain: Protein STRICTOSIDINE SYNTHASE-LIKE 2 (376 aa).

The signal sequence occupies residues 1–23; it reads MMKLLLVVATSVALIFSVTDLSG. N-linked (GlcNAc...) asparagine glycans are attached at residues Asn79 and Asn244.

This sequence belongs to the strictosidine synthase family.

The protein resides in the vacuole. This is Protein STRICTOSIDINE SYNTHASE-LIKE 2 from Arabidopsis thaliana (Mouse-ear cress).